A 403-amino-acid polypeptide reads, in one-letter code: Dihydroorotase (403 aa).

The Zn(2+) site is built by His-48 and His-50. Substrate-binding positions include 50–52 (HLR) and Asn-82. Zn(2+) contacts are provided by Glu-140, His-172, His-211, and Asp-277. Asp-277 is an active-site residue. A substrate-binding site is contributed by His-281.

It belongs to the metallo-dependent hydrolases superfamily. DHOase family. Class I DHOase subfamily. It depends on Zn(2+) as a cofactor.

It catalyses the reaction (S)-dihydroorotate + H2O = N-carbamoyl-L-aspartate + H(+). The protein operates within pyrimidine metabolism; UMP biosynthesis via de novo pathway; (S)-dihydroorotate from bicarbonate: step 3/3. Catalyzes the reversible cyclization of carbamoyl aspartate to dihydroorotate. This chain is Dihydroorotase, found in Archaeoglobus fulgidus (strain ATCC 49558 / DSM 4304 / JCM 9628 / NBRC 100126 / VC-16).